The sequence spans 176 residues: RNA pyrophosphohydrolase (176 aa).

The 144-residue stretch at 6 to 149 folds into the Nudix hydrolase domain; that stretch reads GYRPNVGIVI…KRDVYRRVMK (144 aa). A Nudix box motif is present at residues 38–59; it reads GGINPGESAEQAMYRELFEEVG.

The protein belongs to the Nudix hydrolase family. RppH subfamily. A divalent metal cation serves as cofactor.

Its function is as follows. Accelerates the degradation of transcripts by removing pyrophosphate from the 5'-end of triphosphorylated RNA, leading to a more labile monophosphorylated state that can stimulate subsequent ribonuclease cleavage. The polypeptide is RNA pyrophosphohydrolase (Shigella boydii serotype 18 (strain CDC 3083-94 / BS512)).